Here is a 90-residue protein sequence, read N- to C-terminus: Small ribosomal subunit protein bS16 (90 aa).

Belongs to the bacterial ribosomal protein bS16 family.

This is Small ribosomal subunit protein bS16 from Streptococcus thermophilus (strain CNRZ 1066).